Here is a 473-residue protein sequence, read N- to C-terminus: Photosystem II CP43 reaction center protein (473 aa).

Residues 1 to 14 (MKILYSLRRFYHVE) constitute a propeptide that is removed on maturation. The residue at position 15 (Thr-15) is an N-acetylthreonine. At Thr-15 the chain carries Phosphothreonine. 5 consecutive transmembrane segments (helical) span residues 69-93 (LFEV…PHLA), 134-155 (LLGP…KDRN), 178-200 (KALY…RKIT), 255-275 (KPFA…LSYS), and 291-312 (WFNN…ASQA). Glu-367 lines the [CaMn4O5] cluster pocket. The helical transmembrane segment at 447–471 (RARAAAAGFEKGIDRDLEPVLYMTP) threads the bilayer.

This sequence belongs to the PsbB/PsbC family. PsbC subfamily. PSII is composed of 1 copy each of membrane proteins PsbA, PsbB, PsbC, PsbD, PsbE, PsbF, PsbH, PsbI, PsbJ, PsbK, PsbL, PsbM, PsbT, PsbX, PsbY, PsbZ, Psb30/Ycf12, at least 3 peripheral proteins of the oxygen-evolving complex and a large number of cofactors. It forms dimeric complexes. It depends on Binds multiple chlorophylls and provides some of the ligands for the Ca-4Mn-5O cluster of the oxygen-evolving complex. It may also provide a ligand for a Cl- that is required for oxygen evolution. PSII binds additional chlorophylls, carotenoids and specific lipids. as a cofactor.

The protein localises to the plastid. Its subcellular location is the chloroplast thylakoid membrane. In terms of biological role, one of the components of the core complex of photosystem II (PSII). It binds chlorophyll and helps catalyze the primary light-induced photochemical processes of PSII. PSII is a light-driven water:plastoquinone oxidoreductase, using light energy to abstract electrons from H(2)O, generating O(2) and a proton gradient subsequently used for ATP formation. The protein is Photosystem II CP43 reaction center protein of Saccharum hybrid (Sugarcane).